The sequence spans 247 residues: Tyrosine recombinase XerD-like (247 aa).

The region spanning 1–72 is the Core-binding (CB) domain; sequence MIKHIEAFLA…TVNQFLHYLY (72 aa). The Tyr recombinase domain maps to 91–247; that stretch reads STKVPFTYQL…PITLEKYYRL (157 aa). The active site involves Arg212. Residue Tyr244 is the O-(3'-phospho-DNA)-tyrosine intermediate of the active site.

Belongs to the 'phage' integrase family. XerD-like subfamily.

It localises to the cytoplasm. Putative tyrosine recombinase. Not involved in the cutting and rejoining of the recombining DNA molecules on dif(SL) site. The polypeptide is Tyrosine recombinase XerD-like (Streptococcus uberis (strain ATCC BAA-854 / 0140J)).